The primary structure comprises 215 residues: Triosephosphate isomerase (215 aa).

The active-site Electrophile is His82. Glu153 acts as the Proton acceptor in catalysis.

This sequence belongs to the triosephosphate isomerase family. Homodimer.

It catalyses the reaction D-glyceraldehyde 3-phosphate = dihydroxyacetone phosphate. Its pathway is carbohydrate biosynthesis; gluconeogenesis. The protein operates within carbohydrate degradation; glycolysis; D-glyceraldehyde 3-phosphate from glycerone phosphate: step 1/1. In Heliothis virescens (Tobacco budworm moth), this protein is Triosephosphate isomerase (Tpi).